The chain runs to 69 residues: Putative membrane protein insertion efficiency factor (69 aa).

This sequence belongs to the UPF0161 family.

It localises to the cell inner membrane. Functionally, could be involved in insertion of integral membrane proteins into the membrane. The sequence is that of Putative membrane protein insertion efficiency factor from Geobacter metallireducens (strain ATCC 53774 / DSM 7210 / GS-15).